The chain runs to 157 residues: Protein BeeE (157 aa).

The protein belongs to the phage portal family.

The chain is Protein BeeE (beeE) from Escherichia coli (strain K12).